The sequence spans 235 residues: Orotidine 5'-phosphate decarboxylase (235 aa).

Residues Asp10, Lys33, 60–69 (DLKMNDIPNT), Thr123, Arg185, Gln194, Gly214, and Arg215 contribute to the substrate site. The active-site Proton donor is Lys62.

Belongs to the OMP decarboxylase family. Type 1 subfamily. As to quaternary structure, homodimer.

The catalysed reaction is orotidine 5'-phosphate + H(+) = UMP + CO2. Its pathway is pyrimidine metabolism; UMP biosynthesis via de novo pathway; UMP from orotate: step 2/2. In terms of biological role, catalyzes the decarboxylation of orotidine 5'-monophosphate (OMP) to uridine 5'-monophosphate (UMP). The protein is Orotidine 5'-phosphate decarboxylase of Lactobacillus johnsonii (strain CNCM I-12250 / La1 / NCC 533).